The primary structure comprises 388 residues: 4-hydroxy-3-methylbut-2-en-1-yl diphosphate synthase (flavodoxin) (388 aa).

[4Fe-4S] cluster-binding residues include cysteine 281, cysteine 284, cysteine 316, and glutamate 323.

It belongs to the IspG family. [4Fe-4S] cluster serves as cofactor.

The catalysed reaction is (2E)-4-hydroxy-3-methylbut-2-enyl diphosphate + oxidized [flavodoxin] + H2O + 2 H(+) = 2-C-methyl-D-erythritol 2,4-cyclic diphosphate + reduced [flavodoxin]. It functions in the pathway isoprenoid biosynthesis; isopentenyl diphosphate biosynthesis via DXP pathway; isopentenyl diphosphate from 1-deoxy-D-xylulose 5-phosphate: step 5/6. Its function is as follows. Converts 2C-methyl-D-erythritol 2,4-cyclodiphosphate (ME-2,4cPP) into 1-hydroxy-2-methyl-2-(E)-butenyl 4-diphosphate. The sequence is that of 4-hydroxy-3-methylbut-2-en-1-yl diphosphate synthase (flavodoxin) from Arthrobacter sp. (strain FB24).